The chain runs to 314 residues: NADH-ubiquinone oxidoreductase chain 1 (314 aa).

Transmembrane regions (helical) follow at residues 5–25 (IMPL…VAFL), 78–98 (FSPI…PYLI), 105–125 (LGVL…MIAG), 151–171 (LALI…LNFY), 176–196 (YIWF…SCLA), 227–247 (LIFL…VVIF), 251–271 (DIYS…FIWV), and 294–314 (LSLN…SLLF).

The protein belongs to the complex I subunit 1 family.

It is found in the mitochondrion inner membrane. It catalyses the reaction a ubiquinone + NADH + 5 H(+)(in) = a ubiquinol + NAD(+) + 4 H(+)(out). In terms of biological role, core subunit of the mitochondrial membrane respiratory chain NADH dehydrogenase (Complex I) that is believed to belong to the minimal assembly required for catalysis. Complex I functions in the transfer of electrons from NADH to the respiratory chain. The immediate electron acceptor for the enzyme is believed to be ubiquinone. The sequence is that of NADH-ubiquinone oxidoreductase chain 1 (ND1) from Anopheles quadrimaculatus (Common malaria mosquito).